The chain runs to 333 residues: MTVRIGINGFGRIGRNVFRAAAARSSELEIVAVNDLGDVPTMAHLLAYDSILGRFPEEVTAEPGAIRVGDRTIKVLAERDPGALPWGDLGVDIVIESTGIFTDAAKARSHVDGGAKKVIIAAPASGEDFTVVLGVNDGDYDPERHTIISNASCTTNCLGVLAKVLHDAVGIDSGMMTTVHAYTQDQNLQDAPHKDLRRARAAALNIVPTSSGAAKAIGLVLPELAGRLDAFALRVPVPTGSVTDLTVTTRRGTSVEEVKEAYAAAASGPYKGLLSYVDAPLVSTDIVGDPASLFDAGLTRVCGPQVKVVGWYDNEWGYSNRLIDLATLIGSSL.

Residues 12 to 13 (RI), Asp35, and Arg79 each bind NAD(+). D-glyceraldehyde 3-phosphate-binding positions include 152–154 (SCT), Thr183, Arg198, 211–212 (SG), and Arg234. The Nucleophile role is filled by Cys153. Asn314 lines the NAD(+) pocket.

Belongs to the glyceraldehyde-3-phosphate dehydrogenase family. Homotetramer.

Its subcellular location is the cytoplasm. The catalysed reaction is D-glyceraldehyde 3-phosphate + phosphate + NAD(+) = (2R)-3-phospho-glyceroyl phosphate + NADH + H(+). It participates in carbohydrate degradation; glycolysis; pyruvate from D-glyceraldehyde 3-phosphate: step 1/5. Resistant to pentalenolactone (PL). Its function is as follows. Catalyzes the oxidative phosphorylation of glyceraldehyde 3-phosphate (G3P) to 1,3-bisphosphoglycerate (BPG) using the cofactor NAD. The first reaction step involves the formation of a hemiacetal intermediate between G3P and a cysteine residue, and this hemiacetal intermediate is then oxidized to a thioester, with concomitant reduction of NAD to NADH. The reduced NADH is then exchanged with the second NAD, and the thioester is attacked by a nucleophilic inorganic phosphate to produce BPG. In Streptomyces arenae, this protein is Glyceraldehyde-3-phosphate dehydrogenase 1 (gap1).